The following is a 286-amino-acid chain: Pantothenate synthetase (286 aa).

ATP is bound at residue 30–37; sequence MGNLHAGH. The Proton donor role is filled by histidine 37. Residue glutamine 61 participates in (R)-pantoate binding. Glutamine 61 serves as a coordination point for beta-alanine. 149-152 is a binding site for ATP; that stretch reads GEKD. Glutamine 155 contributes to the (R)-pantoate binding site. Residues valine 178 and 186-189 contribute to the ATP site; that span reads MSSR.

The protein belongs to the pantothenate synthetase family. In terms of assembly, homodimer.

Its subcellular location is the cytoplasm. The enzyme catalyses (R)-pantoate + beta-alanine + ATP = (R)-pantothenate + AMP + diphosphate + H(+). It functions in the pathway cofactor biosynthesis; (R)-pantothenate biosynthesis; (R)-pantothenate from (R)-pantoate and beta-alanine: step 1/1. In terms of biological role, catalyzes the condensation of pantoate with beta-alanine in an ATP-dependent reaction via a pantoyl-adenylate intermediate. This Methylococcus capsulatus (strain ATCC 33009 / NCIMB 11132 / Bath) protein is Pantothenate synthetase.